Consider the following 360-residue polypeptide: Putative FBD-associated F-box protein At5g56430 (360 aa).

Residues 1 to 53 (MRNISDLPNDLLVKILSLIPIKVAASTSLLSKRWGSVWKLIPTLDYDGTYSAA) enclose the F-box domain. 2 Kelch repeats span residues 140 to 186 (IRYT…EQLD) and 235 to 285 (VMCS…SVPE). Residues 276-326 (KWEQPNSVPECLLVSLETVKWILYKGTQEEKDVVKYLLKNGNFIKTMSIRF) enclose the FBD domain.

The polypeptide is Putative FBD-associated F-box protein At5g56430 (Arabidopsis thaliana (Mouse-ear cress)).